The chain runs to 341 residues: Ribosomal RNA small subunit methyltransferase H (341 aa).

S-adenosyl-L-methionine contacts are provided by residues 47–49 (GGY), Asp-64, Phe-91, Asp-109, and Gln-116.

It belongs to the methyltransferase superfamily. RsmH family.

It localises to the cytoplasm. It carries out the reaction cytidine(1402) in 16S rRNA + S-adenosyl-L-methionine = N(4)-methylcytidine(1402) in 16S rRNA + S-adenosyl-L-homocysteine + H(+). Functionally, specifically methylates the N4 position of cytidine in position 1402 (C1402) of 16S rRNA. This Agrobacterium fabrum (strain C58 / ATCC 33970) (Agrobacterium tumefaciens (strain C58)) protein is Ribosomal RNA small subunit methyltransferase H.